The following is a 259-amino-acid chain: Dihydroorotate dehydrogenase B (NAD(+)), electron transfer subunit (259 aa).

Residues 1 to 101 (MKIEDCTVEE…MGPLGRGYDV (101 aa)) form the FAD-binding FR-type domain. Residues 52–55 (RPIS), 69–71 (IYR), and 76–77 (GT) each bind FAD. Residues C223, C228, C231, and C245 each coordinate [2Fe-2S] cluster.

This sequence belongs to the PyrK family. Heterotetramer of 2 PyrK and 2 PyrD type B subunits. Requires [2Fe-2S] cluster as cofactor. FAD serves as cofactor.

Its pathway is pyrimidine metabolism; UMP biosynthesis via de novo pathway; orotate from (S)-dihydroorotate (NAD(+) route): step 1/1. In terms of biological role, responsible for channeling the electrons from the oxidation of dihydroorotate from the FMN redox center in the PyrD type B subunit to the ultimate electron acceptor NAD(+). The polypeptide is Dihydroorotate dehydrogenase B (NAD(+)), electron transfer subunit (Fusobacterium nucleatum subsp. nucleatum (strain ATCC 25586 / DSM 15643 / BCRC 10681 / CIP 101130 / JCM 8532 / KCTC 2640 / LMG 13131 / VPI 4355)).